The chain runs to 827 residues: Glycerol-3-phosphate acyltransferase (827 aa).

An HXXXXD motif motif is present at residues 309 to 314; the sequence is CHRSHI.

It belongs to the GPAT/DAPAT family.

The protein resides in the cell inner membrane. It catalyses the reaction sn-glycerol 3-phosphate + an acyl-CoA = a 1-acyl-sn-glycero-3-phosphate + CoA. It participates in phospholipid metabolism; CDP-diacylglycerol biosynthesis; CDP-diacylglycerol from sn-glycerol 3-phosphate: step 1/3. In Ectopseudomonas mendocina (strain ymp) (Pseudomonas mendocina), this protein is Glycerol-3-phosphate acyltransferase.